A 109-amino-acid polypeptide reads, in one-letter code: Phosphoribosyl-AMP cyclohydrolase (109 aa).

Residue Asp-80 coordinates Mg(2+). Position 81 (Cys-81) interacts with Zn(2+). Mg(2+) is bound by residues Asp-82 and Asp-84. Positions 97 and 104 each coordinate Zn(2+).

This sequence belongs to the PRA-CH family. In terms of assembly, homodimer. Mg(2+) is required as a cofactor. Requires Zn(2+) as cofactor.

The protein resides in the cytoplasm. It catalyses the reaction 1-(5-phospho-beta-D-ribosyl)-5'-AMP + H2O = 1-(5-phospho-beta-D-ribosyl)-5-[(5-phospho-beta-D-ribosylamino)methylideneamino]imidazole-4-carboxamide. It participates in amino-acid biosynthesis; L-histidine biosynthesis; L-histidine from 5-phospho-alpha-D-ribose 1-diphosphate: step 3/9. Functionally, catalyzes the hydrolysis of the adenine ring of phosphoribosyl-AMP. The protein is Phosphoribosyl-AMP cyclohydrolase of Clostridium botulinum (strain Alaska E43 / Type E3).